The primary structure comprises 619 residues: Bifunctional glutathionylspermidine synthetase/amidase (619 aa).

The tract at residues 2–195 (SKGTTSQDAP…LGWMIQTEDT (194 aa)) is gsp amidase. A Peptidase C51 domain is found at 34-176 (DPQEYEDDAV…MVVENGCYTL (143 aa)). Gln58 lines the glutathionylspermidine pocket. Catalysis depends on Cys59, which acts as the S-(gamma-glutamyl-cysteinyl-glycyl)-cysteine intermediate. Cys59 carries the post-translational modification Cysteine sulfenic acid (-SOH); transient. Glutathionylspermidine-binding positions include Arg64, 78–81 (VGMA), and Asn149. A linker region spans residues 196 to 205 (EYSLPQPEIA). Residues 206-619 (GELLKISGAR…DIEPLIVVKK (414 aa)) form a gsp synthetase region. Glutathione is bound at residue Arg316. ATP is bound at residue 316 to 318 (RMD). Mg(2+) contacts are provided by Asp318, Glu330, and Asn332. Ser335 lines the glutathione pocket. Residue Glu391 coordinates spermidine. Positions 392 and 446 each coordinate glutathione. ATP is bound by residues Lys498, Lys533, 539 to 540 (CG), 568 to 571 (QQLW), Gln582, and 603 to 605 (LVI). Asp610 contributes to the spermidine binding site.

It in the C-terminal section; belongs to the glutathionylspermidine synthase preATP-grasp family. In terms of assembly, homodimer. Post-translationally, oxidation of Cys-59 to sulfenic acid during oxidative stress selectively inhibits the amidase activity which leads to a rapid increase in the amounts of intracellular Gsp and Gsp S-thiolated proteins (GspSSPs).

The enzyme catalyses spermidine + glutathione + ATP = glutathionylspermidine + ADP + phosphate + H(+). The catalysed reaction is glutathionylspermidine + H2O = spermidine + glutathione. Its pathway is sulfur metabolism; glutathione metabolism. The protein operates within amine and polyamine metabolism; spermidine metabolism. Its activity is regulated as follows. When exposed to oxidative stress, Gsp amidase activity is transiently inhibited in vivo by oxidation of the catalytic Cys-59 thiol to sulfenic acid; this modification does not affect Gsp synthetase activity. Gsp amidase activity is negatively autoregulated by the Gsp synthetase domain, and is activated by the Gsp synthetase substrates, GSH and ATP-Mg(2+); the occupancy of the synthetase active site may initiate communication through the protein as manifest by the release of inhibition of the amidase activity. A tetrahedral phosphonate analog of glutathionylspermidine, designed as a mimic of the proposed tetrahedral intermediate for either reaction, inhibits the synthetase activity (Ki of 10 uM) but does not inhibit the amidase activity. Amidase activity is inhibited by iodoacetamide in vitro. In terms of biological role, catalyzes the formation of an amide bond between glutathione (GSH) and spermidine coupled with hydrolysis of ATP; also catalyzes the opposing reaction, i.e. the hydrolysis of glutathionylspermidine (Gsp) back to glutathione and spermidine. The amidase active site can also hydrolyze Gsp-disulfide (Gsp-S-S-Gsp) to Gsp-SG and Gsp S-thiolated proteins (GspSSPs) to GSH S-thiolated protein (GSSPs). Likely acts synergistically with glutaredoxin to regulate the redox environment of E.coli and defend against oxidative damage. In vitro, the amidase active site also catalyzes hydrolysis of amide and ester derivatives of glutathione (e.g. glutathione ethyl ester and glutathione amide) but lacks activity toward acetylspermidine (N1 and N8) and acetylspermine (N1). The protein is Bifunctional glutathionylspermidine synthetase/amidase (gss) of Escherichia coli (strain K12).